The primary structure comprises 97 residues: Lipolysis-activating peptide 1-alpha chain (97 aa).

The first 21 residues, 1–21 (MNIMLFCSVFILVSLTGLSVS), serve as a signal peptide directing secretion. Residues 25 to 88 (PGNYPMSLYG…FWAAHKNHCK (64 aa)) enclose the LCN-type CS-alpha/beta domain. Intrachain disulfides connect Cys-39–Cys-62, Cys-48–Cys-67, and Cys-52–Cys-69.

It belongs to the long (3 C-C) scorpion toxin superfamily. As to quaternary structure, monomer (edited version) and heterodimer (non-edited version) of this alpha chain and a beta chain (AC P0CI43). As to expression, expressed by the venom gland.

The protein localises to the secreted. Its function is as follows. The heterodimer non-edited LVP1 induces lipolysis in rat adipocytes. Induction of lipolysis by LVP1 appears to be mediated through the beta-2 adrenergic receptor pathway (ADRB2). Functionally, the edited BmKBTx-like, similar to beta-toxins, may modulate voltage-gated sodium channels (Nav) and may block voltage-gated potassium channels (Kv). In Lychas mucronatus (Chinese swimming scorpion), this protein is Lipolysis-activating peptide 1-alpha chain.